Reading from the N-terminus, the 224-residue chain is Octanoyltransferase (224 aa).

The region spanning 29 to 224 (EATPDALWIC…GQKLATYLAP (196 aa)) is the BPL/LPL catalytic domain. Substrate is bound by residues 68 to 75 (RGGQVTFH), 157 to 159 (ALG), and 170 to 172 (GVA). C188 serves as the catalytic Acyl-thioester intermediate.

It belongs to the LipB family.

The protein resides in the cytoplasm. It catalyses the reaction octanoyl-[ACP] + L-lysyl-[protein] = N(6)-octanoyl-L-lysyl-[protein] + holo-[ACP] + H(+). It functions in the pathway protein modification; protein lipoylation via endogenous pathway; protein N(6)-(lipoyl)lysine from octanoyl-[acyl-carrier-protein]: step 1/2. In terms of biological role, catalyzes the transfer of endogenously produced octanoic acid from octanoyl-acyl-carrier-protein onto the lipoyl domains of lipoate-dependent enzymes. Lipoyl-ACP can also act as a substrate although octanoyl-ACP is likely to be the physiological substrate. This Polaromonas naphthalenivorans (strain CJ2) protein is Octanoyltransferase.